The sequence spans 94 residues: Ammonia regulation of amino acid uptake protein (94 aa).

2 consecutive repeats follow at residues 48 to 57 (HHQIRRRTHQ) and 58 to 67 (HHQIRRRTHQ).

In terms of biological role, involved in ammonia regulation of the GAP1 permease. This is Ammonia regulation of amino acid uptake protein (AUA1) from Saccharomyces cerevisiae (strain ATCC 204508 / S288c) (Baker's yeast).